The sequence spans 347 residues: Ryncolin-2 (347 aa).

The N-terminal stretch at 1 to 19 is a signal peptide; it reads MKPWAAFHLIFLVASSLEG. The tract at residues 49-115 is disordered; that stretch reads LQSQPGIPGI…DKGDKGDKGD (67 aa). Residues 57–114 form the Collagen-like domain; the sequence is GIPGVPGINGSEGLKGDPGPQGLPGETGFDGIPGVAGPKGDKGDQGDKGDKGDKGDKG. A compositionally biased stretch (basic and acidic residues) spans 95 to 115; sequence KGDKGDQGDKGDKGDKGDKGD. Positions 121-341 constitute a Fibrinogen C-terminal domain; that stretch reads DCPPTDVEVR…YADMKIRPQQ (221 aa). Cystine bridges form between Cys-132-Cys-160 and Cys-284-Cys-297.

Belongs to the ficolin lectin family. Veficolin subfamily. Hydroxylated, possibly at Pro-74 and Pro-94. Expressed by the venom duct.

It is found in the secreted. Functionally, initiates complement activation and/or interferes in platelet aggregation and/or blood coagulation. The polypeptide is Ryncolin-2 (Cerberus rynchops (Dog-faced water snake)).